We begin with the raw amino-acid sequence, 258 residues long: Phosphoadenosine 5'-phosphosulfate reductase (258 aa).

The active-site Nucleophile; cysteine thiosulfonate intermediate is Cys-244.

This sequence belongs to the PAPS reductase family. CysH subfamily.

Its subcellular location is the cytoplasm. The catalysed reaction is [thioredoxin]-disulfide + sulfite + adenosine 3',5'-bisphosphate + 2 H(+) = [thioredoxin]-dithiol + 3'-phosphoadenylyl sulfate. Its pathway is sulfur metabolism; hydrogen sulfide biosynthesis; sulfite from sulfate: step 3/3. Functionally, catalyzes the formation of sulfite from phosphoadenosine 5'-phosphosulfate (PAPS) using thioredoxin as an electron donor. The sequence is that of Phosphoadenosine 5'-phosphosulfate reductase from Vibrio vulnificus (strain YJ016).